An 80-amino-acid polypeptide reads, in one-letter code: Defensin-like protein 44 (80 aa).

An N-terminal signal peptide occupies residues 1 to 27 (MAITKTSVTLLLLIIMAASLSNFSVLA). Intrachain disulfides connect C40-C79, C44-C67, C53-C77, and C57-C78.

Belongs to the DEFL family.

The protein resides in the secreted. This Arabidopsis thaliana (Mouse-ear cress) protein is Defensin-like protein 44.